The sequence spans 371 residues: Anhydro-N-acetylmuramic acid kinase (371 aa).

An ATP-binding site is contributed by 9–16 (GTSMDGID).

Belongs to the anhydro-N-acetylmuramic acid kinase family.

The enzyme catalyses 1,6-anhydro-N-acetyl-beta-muramate + ATP + H2O = N-acetyl-D-muramate 6-phosphate + ADP + H(+). It participates in amino-sugar metabolism; 1,6-anhydro-N-acetylmuramate degradation. It functions in the pathway cell wall biogenesis; peptidoglycan recycling. In terms of biological role, catalyzes the specific phosphorylation of 1,6-anhydro-N-acetylmuramic acid (anhMurNAc) with the simultaneous cleavage of the 1,6-anhydro ring, generating MurNAc-6-P. Is required for the utilization of anhMurNAc either imported from the medium or derived from its own cell wall murein, and thus plays a role in cell wall recycling. This is Anhydro-N-acetylmuramic acid kinase from Azorhizobium caulinodans (strain ATCC 43989 / DSM 5975 / JCM 20966 / LMG 6465 / NBRC 14845 / NCIMB 13405 / ORS 571).